The primary structure comprises 182 residues: Orotate phosphoribosyltransferase (182 aa).

5-phospho-alpha-D-ribose 1-diphosphate is bound by residues arginine 96, lysine 97, lysine 100, histidine 102, and glutamate 122–serine 130. Residues threonine 126 and arginine 154 each coordinate orotate.

The protein belongs to the purine/pyrimidine phosphoribosyltransferase family. PyrE subfamily. As to quaternary structure, homodimer. Requires Mg(2+) as cofactor.

It catalyses the reaction orotidine 5'-phosphate + diphosphate = orotate + 5-phospho-alpha-D-ribose 1-diphosphate. It functions in the pathway pyrimidine metabolism; UMP biosynthesis via de novo pathway; UMP from orotate: step 1/2. In terms of biological role, catalyzes the transfer of a ribosyl phosphate group from 5-phosphoribose 1-diphosphate to orotate, leading to the formation of orotidine monophosphate (OMP). This Streptomyces coelicolor (strain ATCC BAA-471 / A3(2) / M145) protein is Orotate phosphoribosyltransferase.